The following is a 551-amino-acid chain: Probable metalloreductase AIM14 (551 aa).

Transmembrane regions (helical) follow at residues 25-45, 67-87, 100-117, 138-155, 172-192, 199-221, and 225-247; these read GIII…VKFI, PTWM…GANI, RYGR…YLIL, KWLS…AIGY, FLNF…IVSI, YYSL…IIFH, and GVTI…LRFY. Residues 102–217 form the Ferric oxidoreductase domain; sequence GRIAYCLLPL…NITAWSMVVL (116 aa). The region spanning 247–369 is the FAD-binding FR-type domain; that stretch reads YKSYPVNNLK…GGSGISFGLP (123 aa). The disordered stretch occupies residues 440 to 492; it reads QDESHAKVEQTQGEEEVDGLLNQDENGIPLQSMKKESFPKKEEGEDEEKSSKD. Residues 472 to 492 show a composition bias toward basic and acidic residues; sequence MKKESFPKKEEGEDEEKSSKD.

Belongs to the ferric reductase (FRE) family. AIM14 subfamily.

The protein localises to the membrane. Probable cell surface metalloreductase. May be involved in iron or copper homeostasis. This Candida tropicalis (strain ATCC MYA-3404 / T1) (Yeast) protein is Probable metalloreductase AIM14 (AIM14).